The sequence spans 535 residues: Succinate-semialdehyde dehydrogenase, mitochondrial (535 aa).

A mitochondrion-targeting transit peptide spans 1-47 (MATCFWLRSCGARRLGSTFPGCRLRPRAGGLVPASGPAPGPAQLRCY). An N6-acetyllysine; alternate modification is found at K126. Residue K126 is modified to N6-succinyllysine; alternate. An N6-succinyllysine mark is found at K135 and K184. Residues R213 and 228–231 (KPAE) contribute to the NAD(+) site. Position 213 (R213) interacts with substrate. The residue at position 265 (K265) is an N6-acetyllysine; alternate. N6-succinyllysine; alternate is present on K265. 284-289 (GSTTTG) is an NAD(+) binding site. Residue E306 is the Proton acceptor of the active site. R334 serves as a coordination point for substrate. The active-site Nucleophile is C340. An intrachain disulfide couples C340 to C342. K365 is subject to N6-acetyllysine. K402 carries the post-translational modification N6-succinyllysine. K411 bears the N6-acetyllysine mark. Residue S498 coordinates substrate. S499 is modified (phosphoserine).

It belongs to the aldehyde dehydrogenase family. In terms of assembly, homotetramer.

It localises to the mitochondrion. The catalysed reaction is succinate semialdehyde + NAD(+) + H2O = succinate + NADH + 2 H(+). It functions in the pathway amino-acid degradation; 4-aminobutanoate degradation. Redox-regulated. Inhibited under oxydizing conditions. Its function is as follows. Catalyzes one step in the degradation of the inhibitory neurotransmitter gamma-aminobutyric acid (GABA). The sequence is that of Succinate-semialdehyde dehydrogenase, mitochondrial (ALDH5A1) from Hylobates lar (Lar gibbon).